The sequence spans 436 residues: UDP-N-acetylmuramate--L-alanine ligase (436 aa).

111 to 117 (GTHGKTS) contacts ATP.

It belongs to the MurCDEF family.

It localises to the cytoplasm. It catalyses the reaction UDP-N-acetyl-alpha-D-muramate + L-alanine + ATP = UDP-N-acetyl-alpha-D-muramoyl-L-alanine + ADP + phosphate + H(+). Its pathway is cell wall biogenesis; peptidoglycan biosynthesis. Functionally, cell wall formation. This Pediococcus pentosaceus (strain ATCC 25745 / CCUG 21536 / LMG 10740 / 183-1w) protein is UDP-N-acetylmuramate--L-alanine ligase.